A 232-amino-acid chain; its full sequence is Large ribosomal subunit protein uL1 (232 aa).

It belongs to the universal ribosomal protein uL1 family. As to quaternary structure, part of the 50S ribosomal subunit.

Its function is as follows. Binds directly to 23S rRNA. The L1 stalk is quite mobile in the ribosome, and is involved in E site tRNA release. Functionally, protein L1 is also a translational repressor protein, it controls the translation of the L11 operon by binding to its mRNA. This chain is Large ribosomal subunit protein uL1, found in Parabacteroides distasonis (strain ATCC 8503 / DSM 20701 / CIP 104284 / JCM 5825 / NCTC 11152).